Here is a 468-residue protein sequence, read N- to C-terminus: Lipase 1 (468 aa).

An N-terminal signal peptide occupies residues 1 to 16 (MRGIAVFLAFISLIFA). The N-linked (GlcNAc...) asparagine glycan is linked to N79. A disulfide bridge links C112 with C285. The active-site Charge relay system is the S196. Residues N231 and N319 are each glycosylated (N-linked (GlcNAc...) asparagine). Residues D348 and H381 each act as charge relay system in the active site. C364 and C409 form a disulfide bridge. N-linked (GlcNAc...) asparagine glycosylation is found at N417, N422, and N451.

This sequence belongs to the AB hydrolase superfamily. Lipase family. Class Lip subfamily.

Its subcellular location is the secreted. It catalyses the reaction a triacylglycerol + H2O = a diacylglycerol + a fatty acid + H(+). Functionally, secreted lipase that is able to hydrolyze both the neutral triacylglycerols and the monopalmitate ester Tween 40, allowing the use of hydrolyzed products as carbon sources. Has broad lipolytic activity, which may be important for colonization and subsequent infection, therefore contributing to the persistence and virulence in human tissue. This chain is Lipase 1, found in Candida albicans (strain SC5314 / ATCC MYA-2876) (Yeast).